We begin with the raw amino-acid sequence, 454 residues long: SH2 domain-containing protein 4A (454 aa).

Disordered regions lie at residues 45–65 (AMER…NGKS), 107–131 (EQEA…KSQY), 152–177 (KEEL…SSSS), and 237–302 (RKSK…AYPQ). Basic and acidic residues predominate over residues 107 to 120 (EQEAEEPRKTHSEE). Phosphoserine occurs at positions 118 and 124. Over residues 240–259 (KAADEKRRSLAKQAREDYKR) the composition is skewed to basic and acidic residues. Ser-261 and Ser-315 each carry phosphoserine. The SH2 domain maps to 347 to 440 (WFHGILTLKK…LGKELLLYPC (94 aa)).

As to quaternary structure, interacts with ESR1. Ubiquitously expressed. Aberrantly expressed in some cancers.

It is found in the cytoplasm. Inhibits estrogen-induced cell proliferation by competing with PLCG for binding to ESR1, blocking the effect of estrogen on PLCG and repressing estrogen-induced proliferation. May play a role in T-cell development and function. This is SH2 domain-containing protein 4A (SH2D4A) from Homo sapiens (Human).